Consider the following 421-residue polypeptide: Aspartokinase (421 aa).

7–10 (KYGG) provides a ligand contact to ATP. 25 to 30 (RIVATK) serves as a coordination point for substrate. Serine 41 lines the ATP pocket. Substrate-binding positions include 45–49 (DTTDD), glutamate 74, 125–126 (LE), 151–154 (RGGS), and serine 154. ATP is bound by residues 174–175 (TD), 180–185 (FSADPR), and lysine 210. ACT domains lie at 267–348 (VTIV…GKVS) and 349–421 (LIGA…GTGR). Residues aspartate 274, 274–279 (DIPGYA), 292–294 (NID), glutamine 298, 360–361 (VT), 374–375 (NI), and 381–382 (SE) each bind substrate.

This sequence belongs to the aspartokinase family. As to quaternary structure, heterotetramer consisting of 2 isoforms Alpha (catalytic and regulation) and of a homodimer of 2 isoforms Beta (regulation).

The enzyme catalyses L-aspartate + ATP = 4-phospho-L-aspartate + ADP. It participates in amino-acid biosynthesis; L-lysine biosynthesis via DAP pathway; (S)-tetrahydrodipicolinate from L-aspartate: step 1/4. Its pathway is amino-acid biosynthesis; L-methionine biosynthesis via de novo pathway; L-homoserine from L-aspartate: step 1/3. The protein operates within amino-acid biosynthesis; L-threonine biosynthesis; L-threonine from L-aspartate: step 1/5. With respect to regulation, feedback inhibition by lysine and threonine. In terms of biological role, catalyzes the phosphorylation of the beta-carboxyl group of aspartic acid with ATP to yield 4-phospho-L-aspartate, which is involved in the branched biosynthetic pathway leading to the biosynthesis of amino acids lysine, threonine, isoleucine and methionine. This Mycobacterium bovis (strain ATCC BAA-935 / AF2122/97) protein is Aspartokinase (ask).